The chain runs to 130 residues: Small ribosomal subunit protein uS8 (130 aa).

This sequence belongs to the universal ribosomal protein uS8 family. In terms of assembly, part of the 30S ribosomal subunit. Contacts proteins S5 and S12.

Functionally, one of the primary rRNA binding proteins, it binds directly to 16S rRNA central domain where it helps coordinate assembly of the platform of the 30S subunit. This chain is Small ribosomal subunit protein uS8, found in Acidiphilium cryptum (strain JF-5).